A 293-amino-acid polypeptide reads, in one-letter code: Acetyl-coenzyme A carboxylase carboxyl transferase subunit beta (293 aa).

The 265-residue stretch at 29–293 (LWVKCSECSQ…GVNELVEANI (265 aa)) folds into the CoA carboxyltransferase N-terminal domain. 4 residues coordinate Zn(2+): Cys-33, Cys-36, Cys-52, and Cys-55. The segment at 33–55 (CSECSQVAYRKDLISNFNVCSNC) adopts a C4-type zinc-finger fold.

Belongs to the AccD/PCCB family. As to quaternary structure, acetyl-CoA carboxylase is a heterohexamer composed of biotin carboxyl carrier protein (AccB), biotin carboxylase (AccC) and two subunits each of ACCase subunit alpha (AccA) and ACCase subunit beta (AccD). It depends on Zn(2+) as a cofactor.

The protein localises to the cytoplasm. It carries out the reaction N(6)-carboxybiotinyl-L-lysyl-[protein] + acetyl-CoA = N(6)-biotinyl-L-lysyl-[protein] + malonyl-CoA. It functions in the pathway lipid metabolism; malonyl-CoA biosynthesis; malonyl-CoA from acetyl-CoA: step 1/1. Its function is as follows. Component of the acetyl coenzyme A carboxylase (ACC) complex. Biotin carboxylase (BC) catalyzes the carboxylation of biotin on its carrier protein (BCCP) and then the CO(2) group is transferred by the transcarboxylase to acetyl-CoA to form malonyl-CoA. This chain is Acetyl-coenzyme A carboxylase carboxyl transferase subunit beta, found in Prochlorococcus marinus (strain MIT 9215).